The sequence spans 214 residues: Probable nicotinate-nucleotide adenylyltransferase (214 aa).

It belongs to the NadD family.

It carries out the reaction nicotinate beta-D-ribonucleotide + ATP + H(+) = deamido-NAD(+) + diphosphate. Its pathway is cofactor biosynthesis; NAD(+) biosynthesis; deamido-NAD(+) from nicotinate D-ribonucleotide: step 1/1. Catalyzes the reversible adenylation of nicotinate mononucleotide (NaMN) to nicotinic acid adenine dinucleotide (NaAD). This Rhodopirellula baltica (strain DSM 10527 / NCIMB 13988 / SH1) protein is Probable nicotinate-nucleotide adenylyltransferase.